We begin with the raw amino-acid sequence, 197 residues long: Recombination protein RecR (197 aa).

The segment at 57 to 72 (CSICFAITEDDPCAIC) adopts a C4-type zinc-finger fold. The 96-residue stretch at 79–174 (GTICVVENSQ…RISRLAHGIP (96 aa)) folds into the Toprim domain.

It belongs to the RecR family.

Functionally, may play a role in DNA repair. It seems to be involved in an RecBC-independent recombinational process of DNA repair. It may act with RecF and RecO. In Pelobacter propionicus (strain DSM 2379 / NBRC 103807 / OttBd1), this protein is Recombination protein RecR.